Reading from the N-terminus, the 119-residue chain is Large ribosomal subunit protein bL20 (119 aa).

The protein belongs to the bacterial ribosomal protein bL20 family.

Binds directly to 23S ribosomal RNA and is necessary for the in vitro assembly process of the 50S ribosomal subunit. It is not involved in the protein synthesizing functions of that subunit. This Stenotrophomonas maltophilia (strain K279a) protein is Large ribosomal subunit protein bL20.